The primary structure comprises 295 residues: Protoheme IX farnesyltransferase (295 aa).

The next 9 helical transmembrane spans lie at 7–27 (VTKPGIIFGNLISVIGGFLLA), 34–54 (VPLFILTMAGVSLVVASGCVF), 78–98 (LIAPGVSLWYASALGVAGIAL), 106–126 (LAALLAVLGFIVYVGVYSLYM), 131–151 (VYGTLVGSLSGAAPPVIGYCA), 161–181 (LILLAIFSLWQMPHSYAIAIF), 207–227 (ITLYILAFMVPTLMLFLGGYA), 228–248 (GYKYLIVATAVSVWWLGMALS), and 263–283 (LFMFSIVTITCLSVMMSVDFQ).

This sequence belongs to the UbiA prenyltransferase family. Protoheme IX farnesyltransferase subfamily.

It is found in the cell inner membrane. It catalyses the reaction heme b + (2E,6E)-farnesyl diphosphate + H2O = Fe(II)-heme o + diphosphate. It participates in porphyrin-containing compound metabolism; heme O biosynthesis; heme O from protoheme: step 1/1. In terms of biological role, converts heme B (protoheme IX) to heme O by substitution of the vinyl group on carbon 2 of heme B porphyrin ring with a hydroxyethyl farnesyl side group. This chain is Protoheme IX farnesyltransferase, found in Aeromonas salmonicida (strain A449).